Reading from the N-terminus, the 496-residue chain is Aminoacetaldehyde dehydrogenase (496 aa).

Residues Leu-166, Trp-168, Lys-192, Ser-246, Thr-249, and Tyr-256 each contribute to the NADH site. The Proton acceptor role is filled by Glu-268. Cys-269 lines the NADH pocket. The active-site Nucleophile is Cys-303. The NADH site is built by Lys-353 and Glu-398.

It belongs to the aldehyde dehydrogenase family. Homotetramer, formed by two symmetrical dimers.

It catalyses the reaction aminoacetaldehyde + NAD(+) + H2O = glycine + NADH + 2 H(+). The enzyme catalyses 3-aminopropanal + NAD(+) + H2O = beta-alanine + NADH + 2 H(+). In terms of biological role, NAD(+)-dependent aminoaldehyde dehydrogenase highly efficient with protonated aminoacetaldehyde (ACTAL) and 3-aminopropanaldehyde (APAL). Likely participates in a still uncharacterized metabolic pathway present in proteobacteria species, in which ACTAL might be an intermediate, yielding glycine. Highly prefers NAD(+) over NADP(+). Shows very poor activity with acetaldehyde, propanaldehyde, butanaldehyde, pentanaldehyde, dimethylaminoacetaldehyde, trimethylaminoacetaldehyde (betaine aldehyde), trimethylaminobutanaldehyde, short aliphatic hydroxyaldehydes such as 3-hydroxypropanaldehyde and 2-hydroxypropanaldehyde (lactaldehyde), and aromatic aldehydes. The polypeptide is Aminoacetaldehyde dehydrogenase (Pseudomonas aeruginosa (strain ATCC 15692 / DSM 22644 / CIP 104116 / JCM 14847 / LMG 12228 / 1C / PRS 101 / PAO1)).